The sequence spans 83 residues: Apolipoprotein C-I (83 aa).

The first 26 residues, 1–26 (MRLILSLPVLAVVLAMVLEGPAPAQA), serve as a signal peptide directing secretion.

This sequence belongs to the apolipoprotein C1 family.

It localises to the secreted. Its function is as follows. Inhibitor of lipoprotein binding to the low density lipoprotein (LDL) receptor, LDL receptor-related protein, and very low density lipoprotein (VLDL) receptor. Associates with high density lipoproteins (HDL) and the triacylglycerol-rich lipoproteins in the plasma and makes up about 10% of the protein of the VLDL and 2% of that of HDL. Appears to interfere directly with fatty acid uptake and is also the major plasma inhibitor of cholesteryl ester transfer protein (CETP). Binds free fatty acids and reduces their intracellular esterification. Modulates the interaction of APOE with beta-migrating VLDL and inhibits binding of beta-VLDL to the LDL receptor-related protein. This is Apolipoprotein C-I (APOC1) from Rousettus aegyptiacus (Egyptian fruit bat).